We begin with the raw amino-acid sequence, 490 residues long: Thyroid hormone receptor alpha (490 aa).

The interval 1–32 (MEQKPSKVECGSDPEENSARSPDGKRKRKNGQ) is disordered. The segment at 1 to 52 (MEQKPSKVECGSDPEENSARSPDGKRKRKNGQCSLKTSMSGYIPSYLDKDEQ) is modulating. Positions 53, 56, 70, 73, 91, 97, 107, and 110 each coordinate Zn(2+). NR C4-type zinc fingers lie at residues 53 to 73 (CVVC…CEGC) and 91 to 115 (CKYD…FKKC). The nuclear receptor DNA-binding region spans 53-127 (CVVCGDKATG…VGMAMDLVLD (75 aa)). The 245-residue stretch at 163–407 (EEWDLIHIAT…EGQQLLGMHV (245 aa)) folds into the NR LBD domain. 3,3',5-triiodo-L-thyronine is bound by residues arginine 228 and serine 277. Positions 457 to 490 (AVCGEDDSSEADSPSSSEEEPEVCEDLAGNAASP) are disordered.

Belongs to the nuclear hormone receptor family. NR1 subfamily. Binds DNA as a dimer; homodimer and heterodimer with RXRB. Interacts with NCOA3 and NCOA6 coactivators, leading to a strong increase of transcription of target genes. Probably interacts with SFPQ. Interacts with C1D. Interacts with AKAP13. Interacts with TP53INP2. Interacts with PER2. Isoform alpha-2 and isoform alpha-1 interact with TACC1, but the interaction with alpha-1 is weaker. The interaction with isoform alpha-1, but not alpha-2, is decreased in the presence of thyroid hormone T3.

Its subcellular location is the nucleus. It is found in the cytoplasm. In terms of biological role, nuclear hormone receptor that can act as a repressor or activator of transcription. High affinity receptor for thyroid hormones, including triiodothyronine and thyroxine. Functionally, does not bind thyroid hormone and functions as a weak dominant negative inhibitor of thyroid hormone action. The protein is Thyroid hormone receptor alpha (THRA) of Homo sapiens (Human).